Reading from the N-terminus, the 788-residue chain is MLNSVKKLLGDSQKRKLKKYEQLVQEINNLEEKLSDLSDEELRHKTITFKDMLRDGKTVDDIKVEAFAVVREAAKRVLGLRHYDVQLIGGLVLLEGNIAEMPTGEGKTLVSSLPTYVRALEGKGVHVITVNDYLAKRDKELIGQVHEFLGLKVGLNIPQIDPSEKKLAYEADITYGIGTEFGFDYLRDNMAASKNEQVQRPYHFAIIDEIDSVLIDEAKTPLIIAGKKSSSSDLHYLCAKVIKSFQDTLHYTYDAESKSASFTEDGITKIEDLFDIDNLYDLEHQTLYHYMIQALRAHVAFQCDVDYIVHDEKILLVDIFTGRVMDGRSLSDGLHQALEAKEGLEITEENQTQASITIQNFFRMYPALSGMTGTAKTEEKEFNRVYNMEVIPIPTNRPIIREDKKDVVYVTADAKYKAVREDVLKHNKQGRPILIGTMSILQSETVARYLDEANITYQLLNAKSAEQEADLIATAGQKGQITIATNMAGRGTDILLGEGVHELGGLHVIGTERHESRRVDNQLKGRAGRQGDPGSSQFFLSLEDEMLKRFAQEEIEKLTKSLKTDETGLILTAKVHDFVNRTQLICEGSHFSMREYNLKLDDVINDQRNVIYKLRNNLLQEDTNMIEIIIPMIDHAVEAISKQYLVEGMLPEEWDFASLTASLNEILSVENMPSLSANNVHSPEDLQSVLKETLSLYKERVNELDSNTDLQQSLRYVALHFLDQNWVNHLDAMTHLKEGIGLRQYQQEDPTRLYQKEALDIFLYTYGNFEKEMCRYVARHLGVPENVQ.

ATP-binding positions include Q86, 104 to 108 (GEGKT), and D493.

The protein belongs to the SecA family. In terms of assembly, monomer and homodimer. Part of the essential Sec protein translocation apparatus which comprises SecA, SecYEG and auxiliary proteins SecDF. Other proteins may also be involved.

Its subcellular location is the cell membrane. It localises to the cytoplasm. It catalyses the reaction ATP + H2O + cellular proteinSide 1 = ADP + phosphate + cellular proteinSide 2.. In terms of biological role, part of the Sec protein translocase complex. Interacts with the SecYEG preprotein conducting channel. Has a central role in coupling the hydrolysis of ATP to the transfer of proteins into and across the cell membrane, serving as an ATP-driven molecular motor driving the stepwise translocation of polypeptide chains across the membrane. The protein is Protein translocase subunit SecA 2 of Bacillus cereus (strain ZK / E33L).